A 153-amino-acid polypeptide reads, in one-letter code: Late embryogenesis abundant protein B19.4 (153 aa).

Residues 1-153 (MASGQQERSE…IDESKFKTKS (153 aa)) form a disordered region. Composition is skewed to basic and acidic residues over residues 7–19 (ERSE…REGE), 32–122 (EAQE…EMGR), and 133–153 (GGER…KTKS). Repeat copies occupy residues 43–62 (RGGQ…EMGH), 63–82 (KGGE…EMGH), 83–102 (KGGE…EMGH), and 103–122 (KGGE…EMGR). A 4 X 20 AA tandem repeats region spans residues 43 to 122 (RGGQTRKEQL…GEEGYREMGR (80 aa)).

The protein belongs to the small hydrophilic plant seed protein family.

Its function is as follows. Lea proteins are late embryonic proteins abundant in higher plant seed embryos. The chain is Late embryogenesis abundant protein B19.4 (B19.4) from Hordeum vulgare (Barley).